A 523-amino-acid chain; its full sequence is Cysteine-rich secretory protein LCCL domain-containing 1 (523 aa).

Positions 1–23 (MKYVVQEWLRITTLLFIAQAVSA) are cleaved as a signal peptide. Positions 66-206 (LDLHNKLRGQ…PKAVYLVCNY (141 aa)) constitute an SCP domain. The segment at 246-298 (ERPYSPHEPEEETNEIERQRSKAQDATAQSRPRTHSPSGSTGSEDSEKNEVIS) is disordered. Residues 269 to 288 (QDATAQSRPRTHSPSGSTGS) show a composition bias toward polar residues. LCCL domains lie at 302–397 (MSQI…ANSF) and 403–505 (TVQA…PGKQ). 4 disulfides stabilise this stretch: C308–C326, C330–C350, C409–C431, and C435–C458.

The protein belongs to the CRISP family.

The protein resides in the secreted. The chain is Cysteine-rich secretory protein LCCL domain-containing 1 (CRISPLD1) from Gallus gallus (Chicken).